Here is a 399-residue protein sequence, read N- to C-terminus: S-adenosylmethionine synthase (399 aa).

ATP is bound at residue His15. Residue Asp17 participates in Mg(2+) binding. Glu43 is a binding site for K(+). Glu56 and Gln99 together coordinate L-methionine. A flexible loop region spans residues 99 to 109; the sequence is QSPDIADGVDH. Residues 175–177, 242–243, Asp251, 257–258, Ala274, and Lys278 each bind ATP; these read DAK, RF, and RK. Asp251 lines the L-methionine pocket. Position 282 (Lys282) interacts with L-methionine.

The protein belongs to the AdoMet synthase family. As to quaternary structure, homotetramer; dimer of dimers. Mg(2+) serves as cofactor. It depends on K(+) as a cofactor.

Its subcellular location is the cytoplasm. It carries out the reaction L-methionine + ATP + H2O = S-adenosyl-L-methionine + phosphate + diphosphate. It functions in the pathway amino-acid biosynthesis; S-adenosyl-L-methionine biosynthesis; S-adenosyl-L-methionine from L-methionine: step 1/1. In terms of biological role, catalyzes the formation of S-adenosylmethionine (AdoMet) from methionine and ATP. The overall synthetic reaction is composed of two sequential steps, AdoMet formation and the subsequent tripolyphosphate hydrolysis which occurs prior to release of AdoMet from the enzyme. In Lactobacillus acidophilus (strain ATCC 700396 / NCK56 / N2 / NCFM), this protein is S-adenosylmethionine synthase.